Consider the following 120-residue polypeptide: Glycine cleavage system H protein (120 aa).

Residues 17–99 (VATVGITAHA…QGGGWLYRLK (83 aa)) form the Lipoyl-binding domain. Position 58 is an N6-lipoyllysine (K58).

Belongs to the GcvH family. In terms of assembly, the glycine cleavage system is composed of four proteins: P, T, L and H. (R)-lipoate is required as a cofactor.

Functionally, the glycine cleavage system catalyzes the degradation of glycine. The H protein shuttles the methylamine group of glycine from the P protein to the T protein. This is Glycine cleavage system H protein from Methylorubrum extorquens (strain CM4 / NCIMB 13688) (Methylobacterium extorquens).